A 143-amino-acid polypeptide reads, in one-letter code: Small ribosomal subunit protein eS19x (143 aa).

The protein belongs to the eukaryotic ribosomal protein eS19 family.

The polypeptide is Small ribosomal subunit protein eS19x (RPS19C) (Arabidopsis thaliana (Mouse-ear cress)).